The following is a 425-amino-acid chain: G protein-activated inward rectifier potassium channel 2 (425 aa).

The Cytoplasmic segment spans residues 1–91 (MTMAKLTESM…IFTTLVDLKW (91 aa)). A phosphoserine mark is found at serine 18 and serine 25. Residues 92 to 116 (RFNLLIFVMVYTVTWLFFGMIWWLI) traverse the membrane as a helical segment. Over 117-140 (AYIRGDMDHIEDPSWTPCVTNLNG) the chain is Extracellular. An intramembrane region (helical; Pore-forming) is located at residues 141-152 (FVSAFLFSIETE). The segment at residues 153–159 (TTIGYGY) is an intramembrane region (pore-forming). Positions 154–159 (TIGYGY) match the Selectivity filter motif. Residues 160–168 (RVITDKCPE) lie on the Extracellular side of the membrane. Residues 169-190 (GIILLLIQSVLGSIVNAFMVGC) form a helical membrane-spanning segment. Topologically, residues 191–425 (MFVKISQPKK…VANLENESKV (235 aa)) are cytoplasmic. Residues 392-425 (NQHAELETEEEEKNPEELTERNGDVANLENESKV) form a disordered region. Residues 422–425 (ESKV) carry the PDZ-binding motif.

This sequence belongs to the inward rectifier-type potassium channel (TC 1.A.2.1) family. KCNJ6 subfamily. As to quaternary structure, associates with KCNJ3/GIRK1 or KCNJ5/GRIK4 to form a G-protein-activated heteromultimer pore-forming unit. The resulting inward current is much larger. Interacts (via PDZ-binding motif) with SNX27 (via PDZ domain); the interaction is required for recycling to the plasma membrane when endocytosed and prevent degradation in lysosomes. Pancreatic beta cells and brain.

Its subcellular location is the membrane. It catalyses the reaction K(+)(in) = K(+)(out). Its activity is regulated as follows. Activated by phosphatidylinositol 4,5 biphosphate (PtdIns(4,5)P2). Inward rectifier potassium channels are characterized by a greater tendency to allow potassium to flow into the cell rather than out of it. Their voltage dependence is regulated by the concentration of extracellular potassium; as external potassium is raised, the voltage range of the channel opening shifts to more positive voltages. The inward rectification is mainly due to the blockage of outward current by internal magnesium. This potassium channel may be involved in the regulation of insulin secretion by glucose and/or neurotransmitters acting through G-protein-coupled receptors. The sequence is that of G protein-activated inward rectifier potassium channel 2 (Kcnj6) from Rattus norvegicus (Rat).